Reading from the N-terminus, the 274-residue chain is Diaminopimelate epimerase (274 aa).

Positions 13, 45, and 63 each coordinate substrate. Cysteine 72 (proton donor) is an active-site residue. Residues 73–74 (GN), asparagine 158, asparagine 191, and 209–210 (ER) contribute to the substrate site. Cysteine 218 (proton acceptor) is an active-site residue. 219 to 220 (GT) is a substrate binding site.

It belongs to the diaminopimelate epimerase family. Homodimer.

It is found in the cytoplasm. The catalysed reaction is (2S,6S)-2,6-diaminopimelate = meso-2,6-diaminopimelate. It participates in amino-acid biosynthesis; L-lysine biosynthesis via DAP pathway; DL-2,6-diaminopimelate from LL-2,6-diaminopimelate: step 1/1. In terms of biological role, catalyzes the stereoinversion of LL-2,6-diaminopimelate (L,L-DAP) to meso-diaminopimelate (meso-DAP), a precursor of L-lysine and an essential component of the bacterial peptidoglycan. In Pelagibacter ubique (strain HTCC1062), this protein is Diaminopimelate epimerase.